The primary structure comprises 557 residues: Copine-6 (557 aa).

C2 domains are found at residues 1–127 and 134–263; these read MSDP…TKPL and TAGK…MQWD. Ca(2+)-binding residues include Asp167, Asp173, Asp229, Asp231, and Asp237. The linker region stretch occupies residues 244-303; it reads STFQEMQEGTANPGQEMQWDCINPKYRDKKKNYKSSGTVVLAQCTVEKVHTFLDYIMGGC. The region spanning 306-526 is the VWFA domain; sequence SFTVAIDFTA…ALAKCVLAEV (221 aa).

It belongs to the copine family. As to quaternary structure, interacts (via second C2 domain) with OS9 (via C-terminus); this interaction occurs in a calcium-dependent manner in vitro. May interact with NECAB1. Requires Ca(2+) as cofactor. As to expression, expressed in the brain. Expressed in pyramidal cells, granule cells, and neurons in the dentate gyrus of the hippocampus and in granule cells of the olfactory bulb (at protein level). Expressed in pyramidal cells of the CA1-CA3 regions, in granule cells of the dentate gyrus, in granule cells of the olfactory bulbs, in the mitral cell layer and in neurons of the cerebral cortex layer II, brainstem and spinal cord. Not detected in glial cells.

It localises to the cytoplasm. It is found in the cell membrane. Its subcellular location is the endosome. The protein resides in the cytoplasmic vesicle. The protein localises to the clathrin-coated vesicle. It localises to the perikaryon. It is found in the cell projection. Its subcellular location is the dendrite. Calcium-dependent phospholipid-binding protein that plays a role in calcium-mediated intracellular processes. Binds phospholipid membranes in a calcium-dependent manner. Plays a role in dendrite formation by melanocytes. This is Copine-6 from Mus musculus (Mouse).